The following is a 310-amino-acid chain: MGRMRGEALAQEVLRLKRERNAVILAHSYQLPEVQEVADFVGDSLGLAREAQRTRAEVIVFCGVHFMAETAAILNPEKTVLLPDLEAGCSLADSIRPEDVLAWKAKHPDGIVVAYVNTKAEVKALADVCVTSANAVEVVSRLPQDRPIYFVPDMFLGAHVARVTGRRLDLFPGECHVHAGIREEHLKALLEAHPGAEFLIHPECGCGSGCLYLKPDAKMLSTEGMVRYAKGAEAREFVVATEVGILHRLKKEAPEKAFFPVKPDAVCEYMKRITLEKVYLSLKEMRHVVRVPEEVAGRARRALEAMVAVG.

Residues His-27 and Ser-44 each coordinate iminosuccinate. [4Fe-4S] cluster is bound at residue Cys-89. Residues 115-117 (YVN) and Ser-132 each bind iminosuccinate. Cys-175 serves as a coordination point for [4Fe-4S] cluster. Residues 201 to 203 (HPE) and Thr-222 contribute to the iminosuccinate site. Residue Cys-267 coordinates [4Fe-4S] cluster.

It belongs to the quinolinate synthase family. Type 2 subfamily. It depends on [4Fe-4S] cluster as a cofactor.

It is found in the cytoplasm. It catalyses the reaction iminosuccinate + dihydroxyacetone phosphate = quinolinate + phosphate + 2 H2O + H(+). Its pathway is cofactor biosynthesis; NAD(+) biosynthesis; quinolinate from iminoaspartate: step 1/1. Functionally, catalyzes the condensation of iminoaspartate with dihydroxyacetone phosphate to form quinolinate. The chain is Quinolinate synthase from Thermus thermophilus (strain ATCC 27634 / DSM 579 / HB8).